The primary structure comprises 456 residues: Peripherin (456 aa).

A compositionally biased stretch (polar residues) spans Met-1–Arg-14. The interval Met-1 to Arg-55 is disordered. The segment at Met-1 to Ala-90 is head. The span at Thr-16–Arg-55 shows a compositional bias: low complexity. In terms of domain architecture, IF rod spans Glu-88 to Ile-397. The segment at Glu-91 to Ala-123 is coil 1A. The segment at Arg-124–Leu-134 is linker 1. A coil 1B region spans residues Cys-135–Val-230. Residues Gln-231–Thr-252 form a linker 2 region. The interval Ser-253–Ser-395 is coil 2. A tail region spans residues Arg-396–Lys-456. Residues Ser-411–Lys-456 are disordered. Residues Ile-434–Lys-456 are compositionally biased toward basic and acidic residues.

The protein belongs to the intermediate filament family. In terms of assembly, forms homodimers (in vitro). Homopolymerizes into a filamentous network (in vitro).

The protein localises to the cytoplasm. It is found in the cytoskeleton. Its subcellular location is the cell projection. It localises to the axon. The protein resides in the perikaryon. Class-III neuronal intermediate filament protein. My form an independent structural network without the involvement of other neurofilaments or may cooperate with other neuronal intermediate filament proteins to form a filamentous network. The polypeptide is Peripherin (prph) (Xenopus laevis (African clawed frog)).